We begin with the raw amino-acid sequence, 455 residues long: J protein JJJ2 (455 aa).

The J domain maps to 12-76 (TYYSILGVPT…QLRAEYDKKL (65 aa)). The tract at residues 104–241 (RNSKPYEQQP…RKKSEKKATP (138 aa)) is disordered. Residues 133-144 (NSNPHNENSSNN) show a composition bias toward low complexity. Over residues 156–168 (TLSKDSEDKHGTD) the composition is skewed to basic and acidic residues.

It localises to the cytoplasm. Its subcellular location is the nucleus. This is J protein JJJ2 (JJJ2) from Candida glabrata (strain ATCC 2001 / BCRC 20586 / JCM 3761 / NBRC 0622 / NRRL Y-65 / CBS 138) (Yeast).